The primary structure comprises 273 residues: Bifunctional protein FolD (273 aa).

NADP(+) contacts are provided by residues 152–154 (GRS), T179, and I220.

The protein belongs to the tetrahydrofolate dehydrogenase/cyclohydrolase family. Homodimer.

The catalysed reaction is (6R)-5,10-methylene-5,6,7,8-tetrahydrofolate + NADP(+) = (6R)-5,10-methenyltetrahydrofolate + NADPH. It carries out the reaction (6R)-5,10-methenyltetrahydrofolate + H2O = (6R)-10-formyltetrahydrofolate + H(+). The protein operates within one-carbon metabolism; tetrahydrofolate interconversion. In terms of biological role, catalyzes the oxidation of 5,10-methylenetetrahydrofolate to 5,10-methenyltetrahydrofolate and then the hydrolysis of 5,10-methenyltetrahydrofolate to 10-formyltetrahydrofolate. The sequence is that of Bifunctional protein FolD from Petrotoga mobilis (strain DSM 10674 / SJ95).